Reading from the N-terminus, the 234-residue chain is Carbohydrate deacetylase (234 aa).

Mg(2+) is bound by residues His-60 and His-123.

Belongs to the YdjC deacetylase family. Mg(2+) is required as a cofactor.

In terms of biological role, probably catalyzes the deacetylation of acetylated carbohydrates an important step in the degradation of oligosaccharides. The polypeptide is Carbohydrate deacetylase (Bacillus anthracis).